Here is a 102-residue protein sequence, read N- to C-terminus: Aspartyl/glutamyl-tRNA(Asn/Gln) amidotransferase subunit C (102 aa).

This sequence belongs to the GatC family. As to quaternary structure, heterotrimer of A, B and C subunits.

It catalyses the reaction L-glutamyl-tRNA(Gln) + L-glutamine + ATP + H2O = L-glutaminyl-tRNA(Gln) + L-glutamate + ADP + phosphate + H(+). The enzyme catalyses L-aspartyl-tRNA(Asn) + L-glutamine + ATP + H2O = L-asparaginyl-tRNA(Asn) + L-glutamate + ADP + phosphate + 2 H(+). Functionally, allows the formation of correctly charged Asn-tRNA(Asn) or Gln-tRNA(Gln) through the transamidation of misacylated Asp-tRNA(Asn) or Glu-tRNA(Gln) in organisms which lack either or both of asparaginyl-tRNA or glutaminyl-tRNA synthetases. The reaction takes place in the presence of glutamine and ATP through an activated phospho-Asp-tRNA(Asn) or phospho-Glu-tRNA(Gln). The protein is Aspartyl/glutamyl-tRNA(Asn/Gln) amidotransferase subunit C of Bordetella avium (strain 197N).